A 145-amino-acid chain; its full sequence is Catabolic 3-dehydroquinase (145 aa).

The active-site Proton acceptor is the Tyr24. Substrate contacts are provided by Asn77, His83, and Asp90. His103 (proton donor) is an active-site residue. Substrate-binding positions include 104-105 (IT) and Arg114.

Belongs to the type-II 3-dehydroquinase family. Homododecamer. Adopts a ring-like structure, composed of an arrangement of two hexameric rings stacked on top of one another.

The catalysed reaction is 3-dehydroquinate = 3-dehydroshikimate + H2O. The protein operates within aromatic compound metabolism; 3,4-dihydroxybenzoate biosynthesis; 3,4-dihydroxybenzoate from 3-dehydroquinate: step 1/2. In terms of biological role, is involved in the catabolism of quinate. Allows the utilization of quinate as carbon source via the beta-ketoadipate pathway. The chain is Catabolic 3-dehydroquinase from Clavispora lusitaniae (strain ATCC 42720) (Yeast).